The primary structure comprises 118 residues: Myotrophin (118 aa).

ANK repeat units follow at residues 1-30, 34-65, and 67-98; these read MGDK…DVNR, GGRK…NAPD, and HGIT…NRKG.

It belongs to the myotrophin family.

The protein resides in the cytoplasm. Its subcellular location is the nucleus. It is found in the perinuclear region. Its function is as follows. Regulates NF-kappa-B transcription factor activity. Promotes growth of cardiomyocytes, but not cardiomyocyte proliferation. Promotes cardiac muscle hypertrophy. Plays a role in the regulation of the growth of actin filaments. Inhibits the activity of the F-actin-capping protein complex. The chain is Myotrophin (mtpn) from Danio rerio (Zebrafish).